The following is a 1417-amino-acid chain: Cytoadherence-linked asexual protein 3.1 (1417 aa).

Residues 1–24 (MVSFFKTPIFILIIFLYLNEKVIC) form the signal peptide. 4 disulfides stabilise this stretch: Cys-333–Cys-361, Cys-407–Cys-413, Cys-517–Cys-545, and Cys-521–Cys-542. Residues 1204-1224 (LANGFMYAFCFFAISQMYAYF) form a helical membrane-spanning segment. The disordered stretch occupies residues 1383–1417 (TYIDTEKMNEADSADSDDEKDSDTPDDELMISRFH). Acidic residues predominate over residues 1394 to 1411 (DSADSDDEKDSDTPDDEL).

Self-associates. Component of the RhopH complex. RhopH complex is at least composed of CLAG3.1/CLAG3.2, RhopH2 and RhopH3 with a 1:1:1 subunit stoichiometry. CLAG3.1/CLAG3.2 mediates subunit association through independent contacts with RhopH2 and RhopH3, which do not directly interact with one another. Interacts with RhopH2. Interacts with RhopH3.

The protein resides in the host cell membrane. The protein localises to the host cytoplasm. Its subcellular location is the cytoplasmic vesicle. It is found in the secretory vesicle. It localises to the rhoptry. In terms of biological role, participates in the formation of new permeability pathways in Plasmodium-infected erythrocytes enabling the uptake of nutrients from the blood plasma. The sequence is that of Cytoadherence-linked asexual protein 3.1 from Plasmodium falciparum.